A 326-amino-acid polypeptide reads, in one-letter code: MNIKPKKYKPIKEEYIKSFKDMLLLRRFEEKCGQLYGMGEIGGFCHLYIGQEAVISAVELIKKKGDSTITSYRDHAHIILAGTEPKYVLAELMGRATGCSKGKGGSMHLFDIPNKFYGGHGIVGAQVPIGTGLAFAEKYNGTNNICFTFLGDGAVNQGQVYEAFNMASLWGLPVVYIIENNEYSMGTSVSRSTFMRDLYKKGESFGIRGFQLDGMDFEEMYNGTKQVAEYVRENSFPVILEVKTYRYRGHSMSDPAKYRSKEEVAKYKERDTLVRIRQIILDNKYATEEDLKAIERSVQEVIKVAVEFSENSPLPSEDELYTDIYV.

As to quaternary structure, heterodimer of an alpha and a beta chain. Thiamine diphosphate is required as a cofactor.

The enzyme catalyses N(6)-[(R)-lipoyl]-L-lysyl-[protein] + pyruvate + H(+) = N(6)-[(R)-S(8)-acetyldihydrolipoyl]-L-lysyl-[protein] + CO2. In terms of biological role, the pyruvate dehydrogenase complex catalyzes the overall conversion of pyruvate to acetyl-CoA and CO(2). It contains multiple copies of three enzymatic components: pyruvate dehydrogenase (E1), dihydrolipoamide acetyltransferase (E2) and lipoamide dehydrogenase (E3). The sequence is that of Pyruvate dehydrogenase E1 component subunit alpha (pdhA) from Rickettsia typhi (strain ATCC VR-144 / Wilmington).